Here is a 242-residue protein sequence, read N- to C-terminus: Type III pantothenate kinase (242 aa).

ATP is bound at residue 7–14 (DLGNSRFK). Substrate contacts are provided by residues tyrosine 91 and 98–101 (GVDR). The active-site Proton acceptor is the aspartate 100. Threonine 121 serves as a coordination point for ATP. Residue threonine 171 coordinates substrate.

Belongs to the type III pantothenate kinase family. In terms of assembly, homodimer. NH4(+) serves as cofactor. K(+) is required as a cofactor.

The protein localises to the cytoplasm. It carries out the reaction (R)-pantothenate + ATP = (R)-4'-phosphopantothenate + ADP + H(+). The protein operates within cofactor biosynthesis; coenzyme A biosynthesis; CoA from (R)-pantothenate: step 1/5. In terms of biological role, catalyzes the phosphorylation of pantothenate (Pan), the first step in CoA biosynthesis. This Xanthomonas euvesicatoria pv. vesicatoria (strain 85-10) (Xanthomonas campestris pv. vesicatoria) protein is Type III pantothenate kinase.